A 305-amino-acid chain; its full sequence is Methionyl-tRNA formyltransferase (305 aa).

Residue 111-114 participates in (6S)-5,6,7,8-tetrahydrofolate binding; sequence SLLP.

Belongs to the Fmt family.

The catalysed reaction is L-methionyl-tRNA(fMet) + (6R)-10-formyltetrahydrofolate = N-formyl-L-methionyl-tRNA(fMet) + (6S)-5,6,7,8-tetrahydrofolate + H(+). Its function is as follows. Attaches a formyl group to the free amino group of methionyl-tRNA(fMet). The formyl group appears to play a dual role in the initiator identity of N-formylmethionyl-tRNA by promoting its recognition by IF2 and preventing the misappropriation of this tRNA by the elongation apparatus. In Helicobacter pylori (strain P12), this protein is Methionyl-tRNA formyltransferase.